Here is a 510-residue protein sequence, read N- to C-terminus: UDP-N-acetylmuramyl-tripeptide synthetase (510 aa).

S36 provides a ligand contact to UDP-N-acetyl-alpha-D-muramoyl-L-alanyl-D-glutamate. 113–119 provides a ligand contact to ATP; sequence GTKGKTT. UDP-N-acetyl-alpha-D-muramoyl-L-alanyl-D-glutamate-binding positions include 159 to 160, S186, and R194; that span reads TT. K228 carries the N6-carboxylysine modification.

The protein belongs to the MurCDEF family. MurE subfamily. Carboxylation is probably crucial for Mg(2+) binding and, consequently, for the gamma-phosphate positioning of ATP.

The protein localises to the cytoplasm. It functions in the pathway cell wall biogenesis; peptidoglycan biosynthesis. In terms of biological role, catalyzes the addition of an amino acid to the nucleotide precursor UDP-N-acetylmuramoyl-L-alanyl-D-glutamate (UMAG) in the biosynthesis of bacterial cell-wall peptidoglycan. In Ligilactobacillus salivarius (strain UCC118) (Lactobacillus salivarius), this protein is UDP-N-acetylmuramyl-tripeptide synthetase.